A 208-amino-acid polypeptide reads, in one-letter code: Outer-membrane lipoprotein carrier protein (208 aa).

The signal sequence occupies residues 1–22 (MKKIFTIAALSLPLFCHLPAMA).

The protein belongs to the LolA family. Monomer.

The protein localises to the periplasm. In terms of biological role, participates in the translocation of lipoproteins from the inner membrane to the outer membrane. Only forms a complex with a lipoprotein if the residue after the N-terminal Cys is not an aspartate (The Asp acts as a targeting signal to indicate that the lipoprotein should stay in the inner membrane). In Shewanella pealeana (strain ATCC 700345 / ANG-SQ1), this protein is Outer-membrane lipoprotein carrier protein.